Consider the following 468-residue polypeptide: Putative ankyrin repeat protein R873 (468 aa).

ANK repeat units lie at residues 38 to 68 (IKTDIIEYIVDNNLLDVLKYFVVLKNLKHNL), 78 to 107 (SLNENLVKNCEKGNIEIIKYLLDIGADIEG), 109 to 137 (DNCAVLTASHHGHIEVVKYLVCKGANFRA), 138 to 167 (NNDKAVRWASDKGHLDVVKYLVSQGSDIRS), 169 to 197 (NDCSICWASGNGHLEMVKYLVSQGVNIRT), 198 to 227 (NDDWAIRLASENGHLEVVKYLVSQGADIRS), 229 to 257 (DDHAIKWASGNGHLEMVKYLVSQSSNIIA), 258 to 287 (EDNYAVRWASENGHLEVIKYLVSQGSNITS), 289 to 316 (YYTIIAASKNGHIDIVKYLVSQGVNIRD), 317 to 346 (CDSSAVQIASENGHLEVVKYLVSQGIDFRE), 348 to 376 (DDLTFDMALRKGHVEIVKYLVGQGVDFRV), 378 to 406 (DDYPVRMASHCGRLGVVKYFVSQGADVRA), 407 to 436 (EDDYAVRMSAEKGHIEVVKFLVDNGANIRA), and 438 to 466 (NDYAVRLASENGHIKIVEYLVSMGAVLNK).

The sequence is that of Putative ankyrin repeat protein R873 from Acanthamoeba polyphaga mimivirus (APMV).